The following is a 95-amino-acid chain: YcgL domain-containing protein Patl_2802 (95 aa).

In terms of domain architecture, YcgL spans 4-88; the sequence is LLCAVYKSSK…PEENLLKQHL (85 aa).

The polypeptide is YcgL domain-containing protein Patl_2802 (Pseudoalteromonas atlantica (strain T6c / ATCC BAA-1087)).